The sequence spans 548 residues: Chaperonin GroEL (548 aa).

ATP-binding positions include 30 to 33 (TLGP), Lys51, 87 to 91 (DGTTT), Gly415, 479 to 481 (NAA), and Asp495. The disordered stretch occupies residues 524–548 (LPKEDKSSDSSSSPAGGMGGMGGMM). Positions 539–548 (GGMGGMGGMM) are enriched in gly residues.

The protein belongs to the chaperonin (HSP60) family. As to quaternary structure, forms a cylinder of 14 subunits composed of two heptameric rings stacked back-to-back. Interacts with the co-chaperonin GroES.

It localises to the cytoplasm. It carries out the reaction ATP + H2O + a folded polypeptide = ADP + phosphate + an unfolded polypeptide.. Together with its co-chaperonin GroES, plays an essential role in assisting protein folding. The GroEL-GroES system forms a nano-cage that allows encapsulation of the non-native substrate proteins and provides a physical environment optimized to promote and accelerate protein folding. The polypeptide is Chaperonin GroEL (Buchnera aphidicola subsp. Acyrthosiphon pisum (strain 5A)).